A 512-amino-acid polypeptide reads, in one-letter code: UDP-N-acetylmuramoyl-L-alanyl-D-glutamate--2,6-diaminopimelate ligase (512 aa).

S32 contacts UDP-N-acetyl-alpha-D-muramoyl-L-alanyl-D-glutamate. 114–120 (GTNGKTT) contacts ATP. UDP-N-acetyl-alpha-D-muramoyl-L-alanyl-D-glutamate-binding positions include 156–157 (TT), S183, and R191. N6-carboxylysine is present on K223. Meso-2,6-diaminopimelate-binding positions include R395, 419 to 422 (DNPR), G469, and E473. Positions 419 to 422 (DNPR) match the Meso-diaminopimelate recognition motif motif.

It belongs to the MurCDEF family. MurE subfamily. Mg(2+) serves as cofactor. Carboxylation is probably crucial for Mg(2+) binding and, consequently, for the gamma-phosphate positioning of ATP.

It is found in the cytoplasm. The catalysed reaction is UDP-N-acetyl-alpha-D-muramoyl-L-alanyl-D-glutamate + meso-2,6-diaminopimelate + ATP = UDP-N-acetyl-alpha-D-muramoyl-L-alanyl-gamma-D-glutamyl-meso-2,6-diaminopimelate + ADP + phosphate + H(+). The protein operates within cell wall biogenesis; peptidoglycan biosynthesis. Catalyzes the addition of meso-diaminopimelic acid to the nucleotide precursor UDP-N-acetylmuramoyl-L-alanyl-D-glutamate (UMAG) in the biosynthesis of bacterial cell-wall peptidoglycan. The polypeptide is UDP-N-acetylmuramoyl-L-alanyl-D-glutamate--2,6-diaminopimelate ligase (Chlorobium phaeobacteroides (strain DSM 266 / SMG 266 / 2430)).